Reading from the N-terminus, the 643-residue chain is Thread biopolymer filament subunit alpha (643 aa).

Residues 1–13 (MSISQTVSKSYTK) are compositionally biased toward polar residues. The disordered stretch occupies residues 1–34 (MSISQTVSKSYTKSVSRGGQGVSYSQSSSHKVGG). The interval 1–191 (MSISQTVSKS…PDTVQHTRIR (191 aa)) is head. Over residues 14–31 (SVSRGGQGVSYSQSSSHK) the composition is skewed to low complexity. In terms of domain architecture, IF rod spans 192–510 (EKQDLQTLNT…KLLDSEETRI (319 aa)). Residues 193 to 227 (KQDLQTLNTKFANLVDQVRTLEQHNAILKAQISMI) form a coil 1A region. The segment at 228-240 (TSPSDTPEGPVNT) is linker 1. The segment at 241–341 (AVVASTVTAT…YNARVREVQA (101 aa)) is coil 1B. A linker 12 region spans residues 342–362 (AVTGGPTAAYSIRVDNTHQAI). The interval 363-381 (DLTTSLQEMKTHYEVLATK) is coil 2A. The tract at residues 382–389 (SREEAFTQ) is linker 2. The tract at residues 390–510 (VQPRIQEMAV…KLLDSEETRI (121 aa)) is coil 2B. Residues 511–643 (SHGGGITITT…SSARSSSRIY (133 aa)) are tail. The segment at 622–643 (SRAGYSASRKSYSSARSSSRIY) is disordered.

The protein belongs to the intermediate filament family. Coiled-coil heterodimer of an alpha and a gamma subunit. Assemble into 10 nm filaments. Forms a massive, conical, intermediate filament biopolymer of approximately 60 cm.

The protein resides in the secreted. The protein localises to the extracellular space. Its function is as follows. Released extracellularly into seawater and provides physical and biological defense against invasive organism by modulation of the viscoelastic properties of mucus. The protein is Thread biopolymer filament subunit alpha of Eptatretus stoutii (Pacific hagfish).